Reading from the N-terminus, the 720-residue chain is DNA helicase II (720 aa).

In terms of domain architecture, UvrD-like helicase ATP-binding spans 8–286 (DSLNDKQREA…IRLEQNYRST (279 aa)). Residues 32–37 (GSGKTR) and arginine 284 contribute to the ATP site. Positions 287-564 (SNILSAANAL…QLMTLHSAKG (278 aa)) constitute a UvrD-like helicase C-terminal domain.

This sequence belongs to the helicase family. UvrD subfamily.

The catalysed reaction is Couples ATP hydrolysis with the unwinding of duplex DNA by translocating in the 3'-5' direction.. It carries out the reaction ATP + H2O = ADP + phosphate + H(+). A helicase with DNA-dependent ATPase activity. Unwinds DNA duplexes with 3'-5' polarity. Translocates on single-stranded DNA with 3'-5' polarity. Initiates unwinding more efficiently from a nicked substrate than double-stranded DNA. Involved in the post-incision events of nucleotide excision repair and methyl-directed mismatch repair, and probably also in repair of alkylated DNA. The polypeptide is DNA helicase II (Escherichia coli (strain K12)).